Reading from the N-terminus, the 93-residue chain is Alpha-defensin 9 (93 aa).

A signal peptide spans 1–19; that stretch reads MKTLVLLSALVLLAFQVQA. Positions 20–58 are excised as a propeptide; it reads DPIQNTDEETKTEEQPGEEDQAVSVSFGDPEGSSLQEES. A disordered region spans residues 23-56; sequence QNTDEETKTEEQPGEEDQAVSVSFGDPEGSSLQE. Cystine bridges form between cysteine 64–cysteine 92, cysteine 66–cysteine 81, and cysteine 71–cysteine 91.

Belongs to the alpha-defensin family. In terms of tissue distribution, paneth cells of the small bowel.

The protein resides in the secreted. Functionally, probably contributes to the antimicrobial barrier function of the small bowel mucosa. This chain is Alpha-defensin 9 (Defa9), found in Mus musculus (Mouse).